A 117-amino-acid chain; its full sequence is Conotoxin vil14.3 (117 aa).

The first 22 residues, 1–22 (MGFRVLVLVVMATTSALPFTFS), serve as a signal peptide directing secretion. Positions 23 to 90 (EEPGRSPFRP…FAELSVGQRR (68 aa)) are excised as a propeptide. The interval 53–79 (RADGQPPDMRQPEMRRPEMRRPEVRQP) is disordered. The span at 62–79 (RQPEMRRPEMRRPEVRQP) shows a compositional bias: basic and acidic residues. Intrachain disulfides connect C96-C116 and C100-C112.

Belongs to the conotoxin R superfamily. Expressed by the venom duct.

Its subcellular location is the secreted. This Conus villepinii (Villepin's cone) protein is Conotoxin vil14.3.